We begin with the raw amino-acid sequence, 424 residues long: Trigger factor (424 aa).

The 86-residue stretch at 163-248 (GNTVVLDFEG…IHEIKAKELP (86 aa)) folds into the PPIase FKBP-type domain.

The protein belongs to the FKBP-type PPIase family. Tig subfamily.

It is found in the cytoplasm. The enzyme catalyses [protein]-peptidylproline (omega=180) = [protein]-peptidylproline (omega=0). Involved in protein export. Acts as a chaperone by maintaining the newly synthesized protein in an open conformation. Functions as a peptidyl-prolyl cis-trans isomerase. This is Trigger factor (tig) from Bacillus subtilis (strain 168).